Here is a 526-residue protein sequence, read N- to C-terminus: Ubiquitin carboxyl-terminal hydrolase 17-like protein A (526 aa).

A disordered region spans residues 1 to 21 (MVVALSFPEADPALSSPDAPE). In terms of domain architecture, USP spans 51–348 (CGLQNTGNSC…NAYVLFYVQQ (298 aa)). The active-site Nucleophile is cysteine 60. Catalysis depends on histidine 307, which acts as the Proton acceptor. Positions 374–385 (KKSRRKKHKKKS) are enriched in basic residues. Disordered regions lie at residues 374–394 (KKSRRKKHKKKSPFTEDLGEP) and 465–494 (RSTANWGRDSPDKENQPLHNADRLLTSQGP). A compositionally biased stretch (basic and acidic residues) spans 473–486 (DSPDKENQPLHNAD).

It belongs to the peptidase C19 family. Polyubiquitinated; ubiquitination leads to its subsequent degradation. In terms of tissue distribution, expressed in hematopoietic progenitor cell lines Ba/F3 and FDCP1. Not detected in brain, lung, liver, kidney, thymus, spleen and bone marrow.

It catalyses the reaction Thiol-dependent hydrolysis of ester, thioester, amide, peptide and isopeptide bonds formed by the C-terminal Gly of ubiquitin (a 76-residue protein attached to proteins as an intracellular targeting signal).. Functionally, deubiquitinating enzyme that removes conjugated ubiquitin from specific proteins to regulate different cellular processes. Has deubiquitinating enzyme activity for DNAH5, suggesting a role in the regulation of DNAH5 degradation by the ubiquitin-proteasome pathway. Has growth-suppressing activity; induces arrest in G1 phase upon controlled expression. The protein is Ubiquitin carboxyl-terminal hydrolase 17-like protein A (Usp17la) of Mus musculus (Mouse).